We begin with the raw amino-acid sequence, 388 residues long: Transcription factor SOX-7 (388 aa).

Disordered regions lie at residues 20–46 (DAEL…SRIR) and 140–197 (RDQN…VDTY). Basic and acidic residues-rich tracts occupy residues 36 to 45 (PGDKGSESRI) and 146 to 164 (PEKR…DRGE). Positions 45-113 (IRRPMNAFMV…QHMQDYPNYK (69 aa)) form a DNA-binding region, HMG box. Residues 268–388 (VSMMSPVPGC…ATYYNSYSVS (121 aa)) enclose the Sox C-terminal domain.

Interacts with CTNNB1/beta-catenin; this interaction may lead to the proteasomal degradation of active CTNNB1 and thus inhibition of Wnt/beta-catenin-stimulated transcription. In terms of tissue distribution, widely expressed in adult and fetal tissues. Present both in mesenchymal and epithelial cells in some adult tissues, including colon. Tends to be down-regulated in prostate adenocarcinomas and colorectal tumors due to promoter hypermethylation.

It localises to the nucleus. The protein localises to the cytoplasm. Binds to and activates the CDH5 promoter, hence plays a role in the transcriptional regulation of genes expressed in the hemogenic endothelium and blocks further differentiation into blood precursors. May be required for the survival of both hematopoietic and endothelial precursors during specification. Competes with GATA4 for binding and activation of the FGF3 promoter. Represses Wnt/beta-catenin-stimulated transcription, probably by targeting CTNNB1 to proteasomal degradation. Binds the DNA sequence 5'-AACAAT-3'. This chain is Transcription factor SOX-7 (SOX7), found in Homo sapiens (Human).